Consider the following 67-residue polypeptide: MSLELLSKLETKIQAALETIELLKMELEEEKQTSSSLSEQNQQLQQELTSWNEKVTGLVGLLNEEVN.

Residues 3-59 (LELLSKLETKIQAALETIELLKMELEEEKQTSSSLSEQNQQLQQELTSWNEKVTGLV) adopt a coiled-coil conformation.

Belongs to the ZapB family. In terms of assembly, homodimer. The ends of the coiled-coil dimer bind to each other, forming polymers. Interacts with FtsZ.

It is found in the cytoplasm. Non-essential, abundant cell division factor that is required for proper Z-ring formation. It is recruited early to the divisome by direct interaction with FtsZ, stimulating Z-ring assembly and thereby promoting cell division earlier in the cell cycle. Its recruitment to the Z-ring requires functional FtsA or ZipA. In Shewanella halifaxensis (strain HAW-EB4), this protein is Cell division protein ZapB.